The sequence spans 366 residues: Chorismate synthase (366 aa).

Arg-48 and Arg-54 together coordinate NADP(+). FMN is bound by residues 125–127 (RSS), 238–239 (NA), Gly-278, 293–297 (KPTSS), and Arg-319.

Belongs to the chorismate synthase family. As to quaternary structure, homotetramer. FMNH2 serves as cofactor.

It carries out the reaction 5-O-(1-carboxyvinyl)-3-phosphoshikimate = chorismate + phosphate. It functions in the pathway metabolic intermediate biosynthesis; chorismate biosynthesis; chorismate from D-erythrose 4-phosphate and phosphoenolpyruvate: step 7/7. In terms of biological role, catalyzes the anti-1,4-elimination of the C-3 phosphate and the C-6 proR hydrogen from 5-enolpyruvylshikimate-3-phosphate (EPSP) to yield chorismate, which is the branch point compound that serves as the starting substrate for the three terminal pathways of aromatic amino acid biosynthesis. This reaction introduces a second double bond into the aromatic ring system. The chain is Chorismate synthase from Methylococcus capsulatus (strain ATCC 33009 / NCIMB 11132 / Bath).